The sequence spans 344 residues: Ferrochelatase (344 aa).

His214 and Glu295 together coordinate Fe cation.

Belongs to the ferrochelatase family.

It is found in the cytoplasm. It carries out the reaction heme b + 2 H(+) = protoporphyrin IX + Fe(2+). It functions in the pathway porphyrin-containing compound metabolism; protoheme biosynthesis; protoheme from protoporphyrin-IX: step 1/1. Functionally, catalyzes the ferrous insertion into protoporphyrin IX. This is Ferrochelatase from Rhizobium leguminosarum bv. trifolii (strain WSM2304).